We begin with the raw amino-acid sequence, 310 residues long: O-acetylserine sulfhydrylase (310 aa).

K44 carries the N6-(pyridoxal phosphate)lysine modification. Pyridoxal 5'-phosphate is bound by residues N74, 178 to 182 (GTGGT), and S266.

This sequence belongs to the cysteine synthase/cystathionine beta-synthase family. As to quaternary structure, homodimer. Requires pyridoxal 5'-phosphate as cofactor.

The enzyme catalyses O-acetyl-L-serine + hydrogen sulfide = L-cysteine + acetate. Its pathway is amino-acid biosynthesis; L-cysteine biosynthesis; L-cysteine from L-serine: step 2/2. Functionally, catalyzes the conversion of O-acetylserine (OAS) to cysteine through the elimination of acetate and addition of hydrogen sulfide. The polypeptide is O-acetylserine sulfhydrylase (cysK) (Mycobacterium bovis (strain ATCC BAA-935 / AF2122/97)).